The primary structure comprises 383 residues: Anhydro-N-acetylmuramic acid kinase (383 aa).

9–16 provides a ligand contact to ATP; it reads GTSLDGID.

The protein belongs to the anhydro-N-acetylmuramic acid kinase family.

It catalyses the reaction 1,6-anhydro-N-acetyl-beta-muramate + ATP + H2O = N-acetyl-D-muramate 6-phosphate + ADP + H(+). Its pathway is amino-sugar metabolism; 1,6-anhydro-N-acetylmuramate degradation. It participates in cell wall biogenesis; peptidoglycan recycling. Its function is as follows. Catalyzes the specific phosphorylation of 1,6-anhydro-N-acetylmuramic acid (anhMurNAc) with the simultaneous cleavage of the 1,6-anhydro ring, generating MurNAc-6-P. Is required for the utilization of anhMurNAc either imported from the medium or derived from its own cell wall murein, and thus plays a role in cell wall recycling. This chain is Anhydro-N-acetylmuramic acid kinase, found in Bacillus cereus (strain ATCC 10987 / NRS 248).